The sequence spans 376 residues: N-acetyldiaminopimelate deacetylase (376 aa).

Residue aspartate 69 is part of the active site. Residue glutamate 128 is the Proton acceptor of the active site.

This sequence belongs to the peptidase M20A family. N-acetyldiaminopimelate deacetylase subfamily.

It carries out the reaction N-acetyl-(2S,6S)-2,6-diaminopimelate + H2O = (2S,6S)-2,6-diaminopimelate + acetate. It participates in amino-acid biosynthesis; L-lysine biosynthesis via DAP pathway; LL-2,6-diaminopimelate from (S)-tetrahydrodipicolinate (acetylase route): step 3/3. Catalyzes the conversion of N-acetyl-diaminopimelate to diaminopimelate and acetate. This is N-acetyldiaminopimelate deacetylase from Streptococcus pneumoniae (strain Hungary19A-6).